The sequence spans 266 residues: Tryptophan synthase alpha chain (266 aa).

Residues E49 and D60 each act as proton acceptor in the active site.

It belongs to the TrpA family. Tetramer of two alpha and two beta chains.

It carries out the reaction (1S,2R)-1-C-(indol-3-yl)glycerol 3-phosphate + L-serine = D-glyceraldehyde 3-phosphate + L-tryptophan + H2O. The protein operates within amino-acid biosynthesis; L-tryptophan biosynthesis; L-tryptophan from chorismate: step 5/5. Functionally, the alpha subunit is responsible for the aldol cleavage of indoleglycerol phosphate to indole and glyceraldehyde 3-phosphate. This Chloroflexus aurantiacus (strain ATCC 29364 / DSM 637 / Y-400-fl) protein is Tryptophan synthase alpha chain.